A 365-amino-acid polypeptide reads, in one-letter code: Heat-inducible transcription repressor HrcA (365 aa).

Belongs to the HrcA family.

Its function is as follows. Negative regulator of class I heat shock genes (grpE-dnaK-dnaJ and groELS operons). Prevents heat-shock induction of these operons. The protein is Heat-inducible transcription repressor HrcA of Nodularia spumigena.